A 725-amino-acid chain; its full sequence is Manganese-exporting P-type ATPase (725 aa).

The 68-residue stretch at 25 to 92 (GRMRIQIEWV…AISGAAHVAA (68 aa)) folds into the HMA domain. The next 6 helical transmembrane spans lie at 101 to 119 (HSSD…GAAA), 142 to 160 (LVAS…RGAL), 165 to 179 (TGTD…IASL), 188 to 202 (LAVL…YLQD), 335 to 359 (VGEN…AITK), and 365 to 383 (MTVL…TPTA). The active-site 4-aspartylphosphate intermediate is the Asp-416. Residues Asp-416, Thr-418, and Asp-618 each contribute to the Mg(2+) site. 2 helical membrane-spanning segments follow: residues 669-688 (AVEV…AAGL) and 698-717 (PVLA…ANSS).

The protein belongs to the cation transport ATPase (P-type) (TC 3.A.3) family. Type IB subfamily.

Its subcellular location is the cell membrane. The enzyme catalyses Mn(2+)(in) + ATP + H2O = Mn(2+)(out) + ADP + phosphate + H(+). Its function is as follows. High affinity, slow turnover Mn(2+) transporting ATPase. The polypeptide is Manganese-exporting P-type ATPase (ctpC) (Mycobacterium leprae (strain TN)).